Consider the following 419-residue polypeptide: Gamma-glutamyl phosphate reductase (419 aa).

The protein belongs to the gamma-glutamyl phosphate reductase family.

It is found in the cytoplasm. The enzyme catalyses L-glutamate 5-semialdehyde + phosphate + NADP(+) = L-glutamyl 5-phosphate + NADPH + H(+). Its pathway is amino-acid biosynthesis; L-proline biosynthesis; L-glutamate 5-semialdehyde from L-glutamate: step 2/2. In terms of biological role, catalyzes the NADPH-dependent reduction of L-glutamate 5-phosphate into L-glutamate 5-semialdehyde and phosphate. The product spontaneously undergoes cyclization to form 1-pyrroline-5-carboxylate. This is Gamma-glutamyl phosphate reductase from Tolumonas auensis (strain DSM 9187 / NBRC 110442 / TA 4).